The sequence spans 282 residues: S-formylglutathione hydrolase (282 aa).

A2 is modified (N-acetylalanine). K4 bears the N6-succinyllysine mark. Residues S149, D226, and H260 each act as charge relay system in the active site.

This sequence belongs to the esterase D family. In terms of assembly, homodimer.

The protein resides in the cytoplasm. The protein localises to the cytoplasmic vesicle. The enzyme catalyses S-formylglutathione + H2O = formate + glutathione + H(+). Functionally, serine hydrolase involved in the detoxification of formaldehyde. This Bos taurus (Bovine) protein is S-formylglutathione hydrolase (ESD).